Consider the following 104-residue polypeptide: Photosystem II reaction center Psb28 protein (104 aa).

Belongs to the Psb28 family. As to quaternary structure, part of the photosystem II complex.

The protein localises to the cellular thylakoid membrane. This chain is Photosystem II reaction center Psb28 protein, found in Synechococcus sp. (strain JA-2-3B'a(2-13)) (Cyanobacteria bacterium Yellowstone B-Prime).